The chain runs to 244 residues: DNA repair protein RecO (244 aa).

Belongs to the RecO family.

Functionally, involved in DNA repair and RecF pathway recombination. In Caldicellulosiruptor bescii (strain ATCC BAA-1888 / DSM 6725 / KCTC 15123 / Z-1320) (Anaerocellum thermophilum), this protein is DNA repair protein RecO.